Here is a 390-residue protein sequence, read N- to C-terminus: Digeranylgeranylglycerophospholipid reductase (390 aa).

The FAD site is built by A18, E37, C48, A49, A51, R98, V122, D278, G290, and I291. V368 lines the a 2,3-bis-O-(geranylgeranyl)-sn-glycerol 1-phospholipid pocket.

Belongs to the geranylgeranyl reductase family. DGGGPL reductase subfamily. The cofactor is FAD.

The enzyme catalyses a 2,3-bis-O-phytanyl-sn-glycerol 1-phospholipid + 8 A = a 2,3-bis-O-(geranylgeranyl)-sn-glycerol 1-phospholipid + 8 AH2. It catalyses the reaction 2,3-bis-O-(phytanyl)-sn-glycerol 1-phosphate + 8 A = 2,3-bis-O-(geranylgeranyl)-sn-glycerol 1-phosphate + 8 AH2. The catalysed reaction is CDP-2,3-bis-O-(geranylgeranyl)-sn-glycerol + 8 AH2 = CDP-2,3-bis-O-(phytanyl)-sn-glycerol + 8 A. It carries out the reaction archaetidylserine + 8 AH2 = 2,3-bis-O-phytanyl-sn-glycero-3-phospho-L-serine + 8 A. It functions in the pathway membrane lipid metabolism; glycerophospholipid metabolism. Its function is as follows. Is involved in the reduction of 2,3-digeranylgeranylglycerophospholipids (unsaturated archaeols) into 2,3-diphytanylglycerophospholipids (saturated archaeols) in the biosynthesis of archaeal membrane lipids. Catalyzes the formation of archaetidic acid (2,3-di-O-phytanyl-sn-glyceryl phosphate) from 2,3-di-O-geranylgeranylglyceryl phosphate (DGGGP) via the hydrogenation of each double bond of the isoprenoid chains. Is also probably able to reduce double bonds of geranyl groups in CDP-2,3-bis-O-(geranylgeranyl)-sn-glycerol and archaetidylserine, thus acting at various stages in the biosynthesis of archaeal membrane lipids. The chain is Digeranylgeranylglycerophospholipid reductase from Methanococcus vannielii (strain ATCC 35089 / DSM 1224 / JCM 13029 / OCM 148 / SB).